Reading from the N-terminus, the 293-residue chain is Foldase protein PrsA 2 (293 aa).

The N-terminal stretch at 1–20 (MKKKLILGLVMMMALFSLAA) is a signal peptide. Cys21 carries the N-palmitoyl cysteine lipid modification. Cys21 carries S-diacylglycerol cysteine lipidation. The PpiC domain occupies 135–226 (QPDITVSHIL…YGYHIIQMDK (92 aa)).

It belongs to the PrsA family.

The protein localises to the cell membrane. The catalysed reaction is [protein]-peptidylproline (omega=180) = [protein]-peptidylproline (omega=0). Its function is as follows. Plays a major role in protein secretion by helping the post-translocational extracellular folding of several secreted proteins. In Listeria monocytogenes serovar 1/2a (strain ATCC BAA-679 / EGD-e), this protein is Foldase protein PrsA 2 (prsA2).